The sequence spans 237 residues: Purine nucleoside phosphorylase DeoD-type (237 aa).

H4 serves as a coordination point for a purine D-ribonucleoside. Residues G20, R24, R43, and 87 to 90 (RVGT) contribute to the phosphate site. A purine D-ribonucleoside contacts are provided by residues 180 to 182 (EME) and 204 to 205 (SD). The active-site Proton donor is the D205.

It belongs to the PNP/UDP phosphorylase family. As to quaternary structure, homohexamer; trimer of homodimers.

It carries out the reaction a purine D-ribonucleoside + phosphate = a purine nucleobase + alpha-D-ribose 1-phosphate. The enzyme catalyses a purine 2'-deoxy-D-ribonucleoside + phosphate = a purine nucleobase + 2-deoxy-alpha-D-ribose 1-phosphate. In terms of biological role, catalyzes the reversible phosphorolytic breakdown of the N-glycosidic bond in the beta-(deoxy)ribonucleoside molecules, with the formation of the corresponding free purine bases and pentose-1-phosphate. This Streptococcus suis (strain 98HAH33) protein is Purine nucleoside phosphorylase DeoD-type.